The chain runs to 182 residues: CDP-diacylglycerol--glycerol-3-phosphate 3-phosphatidyltransferase (182 aa).

The Cytoplasmic portion of the chain corresponds to 2–12 (QFNIPTLLTLF). A helical transmembrane segment spans residues 13 to 37 (RVILIPFLVVVFYLPFAWAPMVSAL). Over 38–60 (IFCIAAITDWFDGFLARRWNQST) the chain is Periplasmic. Residues 61–81 (RFGAFLDPVADKVLVAIAMVL) form a helical membrane-spanning segment. The Cytoplasmic segment spans residues 82–86 (VTEHY). Residues 87-107 (HSWWVTLPAATMIAREIIISA) traverse the membrane as a helical segment. The Periplasmic portion of the chain corresponds to 108-145 (LREWMAELGKRSSVAVSWIGKVKTTAQMVALAWLLWRP). Residues 146-168 (NIWVEYAGIALFFVAAVLTLWSM) form a helical membrane-spanning segment. The Cytoplasmic segment spans residues 169-181 (LQYLSAARGDLLD).

It belongs to the CDP-alcohol phosphatidyltransferase class-I family.

The protein localises to the cell inner membrane. It carries out the reaction a CDP-1,2-diacyl-sn-glycerol + sn-glycerol 3-phosphate = a 1,2-diacyl-sn-glycero-3-phospho-(1'-sn-glycero-3'-phosphate) + CMP + H(+). It functions in the pathway phospholipid metabolism; phosphatidylglycerol biosynthesis; phosphatidylglycerol from CDP-diacylglycerol: step 1/2. Catalyzes the conversion of cytidine diphosphate diacylglycerol (CDP-DG) and glycerol 3-phosphate into phosphatidylglycerol. Essential for the synthesis of anionic phospholipids, thereby playing a role in balancing the ratio of zwitterionic and anionic phospholipids, which is thought to be important for normal membrane function. This Salmonella choleraesuis (strain SC-B67) protein is CDP-diacylglycerol--glycerol-3-phosphate 3-phosphatidyltransferase.